Reading from the N-terminus, the 207-residue chain is LexA repressor (207 aa).

Positions 28–48 form a DNA-binding region, H-T-H motif; the sequence is VREIGEAVGLASSFTVHGHLS. Residues Ser130 and Lys168 each act as for autocatalytic cleavage activity in the active site.

This sequence belongs to the peptidase S24 family. In terms of assembly, homodimer.

It carries out the reaction Hydrolysis of Ala-|-Gly bond in repressor LexA.. In terms of biological role, represses a number of genes involved in the response to DNA damage (SOS response), including recA and lexA. In the presence of single-stranded DNA, RecA interacts with LexA causing an autocatalytic cleavage which disrupts the DNA-binding part of LexA, leading to derepression of the SOS regulon and eventually DNA repair. The sequence is that of LexA repressor from Staphylococcus aureus (strain Newman).